The following is a 268-amino-acid chain: MERYESLFAQLKERKEGAFVPFVTLGDPGIEQSLKIIDTLIEAGADALELGIPFSDPLADGPTIQNATLRAFAAGVTPAQCFEMLALIRQKHPTIPIGLLMYANLVFNKGIDEFYAQCEKVGVDSVLVADVPVEESAPFRQAALRHNVAPIFICPPNADDDLLRQIASYGRGYTYLLSRAGVTGAENRAALPLNHLVAKLKEYNAAPPLQGFGISAPDQVKAAIDAGAAGAISGSAIVKIIEQHINEPEKMLAALKVFVQPMKAATRS.

Residues E49 and D60 each act as proton acceptor in the active site.

Belongs to the TrpA family. Tetramer of two alpha and two beta chains.

It carries out the reaction (1S,2R)-1-C-(indol-3-yl)glycerol 3-phosphate + L-serine = D-glyceraldehyde 3-phosphate + L-tryptophan + H2O. The protein operates within amino-acid biosynthesis; L-tryptophan biosynthesis; L-tryptophan from chorismate: step 5/5. In terms of biological role, the alpha subunit is responsible for the aldol cleavage of indoleglycerol phosphate to indole and glyceraldehyde 3-phosphate. The protein is Tryptophan synthase alpha chain of Escherichia coli (strain ATCC 8739 / DSM 1576 / NBRC 3972 / NCIMB 8545 / WDCM 00012 / Crooks).